The primary structure comprises 153 residues: Ribonuclease H (153 aa).

The RNase H type-1 domain maps to 1–141 (MKKIQLFTDG…CDDLARRAAE (141 aa)). 4 residues coordinate Mg(2+): aspartate 9, glutamate 47, aspartate 69, and aspartate 133.

Belongs to the RNase H family. Monomer. It depends on Mg(2+) as a cofactor.

Its subcellular location is the cytoplasm. The catalysed reaction is Endonucleolytic cleavage to 5'-phosphomonoester.. Endonuclease that specifically degrades the RNA of RNA-DNA hybrids. The sequence is that of Ribonuclease H from Psychromonas ingrahamii (strain DSM 17664 / CCUG 51855 / 37).